The chain runs to 327 residues: Sideroflexin FSF1 (327 aa).

Position 2 is an N-acetylalanine (Ala-2). 4 consecutive transmembrane segments (helical) span residues 98–118 (NLVV…TVFW), 143–163 (SQLL…ALGL), 179–199 (LILG…VNVF), and 272–292 (ANLG…LGIF).

It belongs to the sideroflexin family.

It localises to the mitochondrion membrane. In terms of biological role, mitochondrial amino-acid transporter that mediates transport of serine into mitochondria. This is Sideroflexin FSF1 from Saccharomyces cerevisiae (strain ATCC 204508 / S288c) (Baker's yeast).